The primary structure comprises 389 residues: Chalcone synthase 3 (389 aa).

The active site involves Cys164.

The protein belongs to the thiolase-like superfamily. Chalcone/stilbene synthases family.

It catalyses the reaction (E)-4-coumaroyl-CoA + 3 malonyl-CoA + 3 H(+) = 2',4,4',6'-tetrahydroxychalcone + 3 CO2 + 4 CoA. It participates in secondary metabolite biosynthesis; flavonoid biosynthesis. Its function is as follows. The primary product of this enzyme is 4,2',4',6'-tetrahydroxychalcone (also termed naringenin-chalcone or chalcone) which can under specific conditions spontaneously isomerize into naringenin. The chain is Chalcone synthase 3 (CHS3) from Pisum sativum (Garden pea).